The following is a 111-amino-acid chain: U-scoloptoxin(16)-Er8a (111 aa).

The signal sequence occupies residues M1 to G26.

This sequence belongs to the scoloptoxin-16 family. Post-translationally, contains 4 disulfide bonds. Expressed by the venom gland.

The protein resides in the secreted. The protein is U-scoloptoxin(16)-Er8a of Ethmostigmus rubripes (Giant centipede).